The sequence spans 284 residues: D-tagatose-1,6-bisphosphate aldolase subunit GatY (284 aa).

The active-site Proton donor is the Asp-82. Zn(2+) is bound by residues His-83 and His-180. Position 181 (Gly-181) interacts with dihydroxyacetone phosphate. His-208 contributes to the Zn(2+) binding site. Residues 209–211 (GAS) and 230–233 (NVAT) contribute to the dihydroxyacetone phosphate site.

The protein belongs to the class II fructose-bisphosphate aldolase family. TagBP aldolase GatY subfamily. Forms a complex with GatZ. The cofactor is Zn(2+).

It carries out the reaction D-tagatofuranose 1,6-bisphosphate = D-glyceraldehyde 3-phosphate + dihydroxyacetone phosphate. Its pathway is carbohydrate metabolism; D-tagatose 6-phosphate degradation; D-glyceraldehyde 3-phosphate and glycerone phosphate from D-tagatose 6-phosphate: step 2/2. In terms of biological role, catalytic subunit of the tagatose-1,6-bisphosphate aldolase GatYZ, which catalyzes the reversible aldol condensation of dihydroxyacetone phosphate (DHAP or glycerone-phosphate) with glyceraldehyde 3-phosphate (G3P) to produce tagatose 1,6-bisphosphate (TBP). Requires GatZ subunit for full activity and stability. Is involved in the catabolism of galactitol. The protein is D-tagatose-1,6-bisphosphate aldolase subunit GatY of Klebsiella pneumoniae subsp. pneumoniae (strain ATCC 700721 / MGH 78578).